The sequence spans 179 residues: Adenine phosphoribosyltransferase (179 aa).

The protein belongs to the purine/pyrimidine phosphoribosyltransferase family. In terms of assembly, homodimer.

It is found in the cytoplasm. The catalysed reaction is AMP + diphosphate = 5-phospho-alpha-D-ribose 1-diphosphate + adenine. Its pathway is purine metabolism; AMP biosynthesis via salvage pathway; AMP from adenine: step 1/1. Catalyzes a salvage reaction resulting in the formation of AMP, that is energically less costly than de novo synthesis. This Nitrobacter winogradskyi (strain ATCC 25391 / DSM 10237 / CIP 104748 / NCIMB 11846 / Nb-255) protein is Adenine phosphoribosyltransferase.